The chain runs to 112 residues: Ribosome-binding factor A (112 aa).

The protein belongs to the RbfA family. As to quaternary structure, monomer. Binds 30S ribosomal subunits, but not 50S ribosomal subunits or 70S ribosomes.

The protein resides in the cytoplasm. Its function is as follows. One of several proteins that assist in the late maturation steps of the functional core of the 30S ribosomal subunit. Associates with free 30S ribosomal subunits (but not with 30S subunits that are part of 70S ribosomes or polysomes). Required for efficient processing of 16S rRNA. May interact with the 5'-terminal helix region of 16S rRNA. The chain is Ribosome-binding factor A from Ruthia magnifica subsp. Calyptogena magnifica.